The following is a 244-amino-acid chain: Sugar fermentation stimulation protein homolog (244 aa).

Belongs to the SfsA family.

In Dinoroseobacter shibae (strain DSM 16493 / NCIMB 14021 / DFL 12), this protein is Sugar fermentation stimulation protein homolog.